The primary structure comprises 234 residues: uncharacterized protein (234 aa).

The interval 199–234 is disordered; that stretch reads DNQNEPLENYSDDNNFSNFDETEHVDDSEMNDDNFI.

This is an uncharacterized protein from Buchnera aphidicola subsp. Schizaphis graminum (strain Sg).